The sequence spans 325 residues: UDP-N-acetylglucosamine transporter ROCK1 (325 aa).

Topologically, residues 1-13 (MATANGAKSPSSM) are cytoplasmic. Residues 14 to 34 (GPKVLFYSILLTLQYGAQPLI) traverse the membrane as a helical segment. At 35-42 (SKRCIRKD) the chain is on the lumenal side. Residues 43 to 63 (VIVTSSVLTCEIVKVICALIL) traverse the membrane as a helical segment. Residues 64–109 (MARNGSLKGLAKEWTLMGSLTASGLPAAIYALQNSLLQISYRSLDS) are Cytoplasmic-facing. Residues 110–130 (LTFSILNQTKIFFTAFFTFII) traverse the membrane as a helical segment. At 131-135 (LRQKQ) the chain is on the lumenal side. Residues 136–156 (SILQIGALCLLIMAAVLLSVG) form a helical membrane-spanning segment. Residues 157–171 (EGSNKDSSGINADQK) are Cytoplasmic-facing. The chain crosses the membrane as a helical span at residues 172 to 192 (LFYGIIPVLAASVLSGLASSL). Topologically, residues 193–203 (CQWASQVKKHS) are lumenal. Residues 204–224 (SYLMTVEMSIVGSLCLLVSTL) traverse the membrane as a helical segment. The Cytoplasmic segment spans residues 225-241 (KSPDGEAIKKYGFFHGW). A helical membrane pass occupies residues 242–262 (TALTLVPVISNALGGILVGLV). At 263 to 270 (TSHAGGVR) the chain is on the lumenal side. The chain crosses the membrane as a helical span at residues 271–291 (KGFVIVSALLVTALLQFAFEG). Residues 292-325 (KPPSSYCLVALPLVMSSISMYQKYPYIDKKKKKV) are Cytoplasmic-facing.

The protein belongs to the nucleotide-sugar transporter family. CMP-Sialate:CMP antiporter (TC 2.A.7.12) subfamily. Expressed in roots, cotyledons, leaves, stems, flowers and siliques.

It localises to the endoplasmic reticulum membrane. Mediates the transport of UDP-linked acetylated hexosamines across the endoplasmic reticulum (ER) membrane. Facilitates UDP-N-acetylglucosamine (UDP-GlcNAc) and UDP-N-acetylgalactosamine (UDP-GalNAc) transport. Regulates the cytokinin signal in meristematic cells through modulating activity of cytokinin oxidases/dehydrogenases. Part of the ER quality control system, which determines the fate of aberrant proteins in the secretory pathway. This is UDP-N-acetylglucosamine transporter ROCK1 from Arabidopsis thaliana (Mouse-ear cress).